The following is a 486-amino-acid chain: Ribosomal RNA small subunit methyltransferase F (486 aa).

S-adenosyl-L-methionine contacts are provided by residues 122–128 (ASAPGSK), glutamate 146, aspartate 173, and aspartate 191. Catalysis depends on cysteine 244, which acts as the Nucleophile.

Belongs to the class I-like SAM-binding methyltransferase superfamily. RsmB/NOP family.

It is found in the cytoplasm. The enzyme catalyses cytidine(1407) in 16S rRNA + S-adenosyl-L-methionine = 5-methylcytidine(1407) in 16S rRNA + S-adenosyl-L-homocysteine + H(+). Specifically methylates the cytosine at position 1407 (m5C1407) of 16S rRNA. This Shewanella loihica (strain ATCC BAA-1088 / PV-4) protein is Ribosomal RNA small subunit methyltransferase F.